Here is a 116-residue protein sequence, read N- to C-terminus: CDKN2AIP N-terminal-like protein (116 aa).

At Met-1 the chain carries N-acetylmethionine. The region spanning 24-116 is the XRN2-binding (XTBD) domain; sequence AEQFRSYSES…RSELMKKHQS (93 aa).

Belongs to the CARF family. Interacts with XRN2; the interaction is direct.

This chain is CDKN2AIP N-terminal-like protein (CDKN2AIPNL), found in Homo sapiens (Human).